The sequence spans 1011 residues: Rap guanine nucleotide exchange factor 4 (1011 aa).

The DEP domain maps to 216-291 (SRAPHMIRDR…DKYLFYRFLD (76 aa)). 3',5'-cyclic AMP-binding positions include 422–425 (GKLA) and 432–433 (RA). One can recognise an N-terminal Ras-GEF domain in the interval 496–634 (QKYTVMSGTP…ELEKIVKQIS (139 aa)). The Ras-GEF domain occupies 772 to 1009 (SSKDLAYQMT…SQMSHRLEPR (238 aa)).

As to quaternary structure, interacts with RAP1B, RIMS1 and RIMS2. Probably part of a complex with RIMS2 and GTP-activated RAB3A. As to expression, expressed in cerebellum, pituitary, adrenal gland and liver.

Its subcellular location is the cytoplasm. The protein localises to the membrane. Its function is as follows. Guanine nucleotide exchange factor (GEF) for RAP1A, RAP1B and RAP2A small GTPases that is activated by binding cAMP. Seems not to activate RAB3A. Involved in cAMP-dependent, PKA-independent exocytosis through interaction with RIMS2. This Mus musculus (Mouse) protein is Rap guanine nucleotide exchange factor 4 (Rapgef4).